The sequence spans 214 residues: MINNGKALNNKKSIDYSKLFRHQAKFVAGAIHINQIPDFSLPEIVFVGKSNVGKSSIINTICNNKSLAKVSNTPGRTRQINFFNIVDKLIIVDLPGYGFANVPISVKEQWEGLITYYLRNSHNLMLVNLLIDSRRGIKENDKKVAELLLANKREFQIIFTKSDKVTDRENLNYEAQNFLATLNYLCNVIYVSSRNKEGMRELKASFAQCIKHQR.

An EngB-type G domain is found at 40 to 212 (SLPEIVFVGK…KASFAQCIKH (173 aa)). Residues 48-55 (GKSNVGKS), 75-79 (GRTRQ), 93-96 (DLPG), 160-163 (TKSD), and 191-193 (VSS) contribute to the GTP site. S55 and T77 together coordinate Mg(2+).

Belongs to the TRAFAC class TrmE-Era-EngA-EngB-Septin-like GTPase superfamily. EngB GTPase family. It depends on Mg(2+) as a cofactor.

Its function is as follows. Necessary for normal cell division and for the maintenance of normal septation. The sequence is that of Probable GTP-binding protein EngB from Rickettsia prowazekii (strain Madrid E).